A 228-amino-acid chain; its full sequence is Cytokinin riboside 5'-monophosphate phosphoribohydrolase LOG5 (228 aa).

Residues Glu79, 97–98 (RK), and 114–120 (GYGTLEE) contribute to the substrate site.

The protein belongs to the LOG family. In terms of tissue distribution, expressed in roots and shoots. Detected in vascular tissues of roots, cotyledons, and leaves, axillary buds, immature and mature flowers, fruit abscission zones and ovules.

It is found in the cytoplasm. The protein resides in the nucleus. The enzyme catalyses N(6)-(dimethylallyl)adenosine 5'-phosphate + H2O = N(6)-dimethylallyladenine + D-ribose 5-phosphate. It catalyses the reaction 9-ribosyl-trans-zeatin 5'-phosphate + H2O = trans-zeatin + D-ribose 5-phosphate. Its function is as follows. Cytokinin-activating enzyme working in the direct activation pathway. Phosphoribohydrolase that converts inactive cytokinin nucleotides to the biologically active free-base forms. The protein is Cytokinin riboside 5'-monophosphate phosphoribohydrolase LOG5 (LOG5) of Arabidopsis thaliana (Mouse-ear cress).